Reading from the N-terminus, the 274-residue chain is Putative phosphoenolpyruvate synthase regulatory protein (274 aa).

An ADP-binding site is contributed by 154 to 161; sequence GVSRCGKT.

The protein belongs to the pyruvate, phosphate/water dikinase regulatory protein family. PSRP subfamily.

The enzyme catalyses [pyruvate, water dikinase] + ADP = [pyruvate, water dikinase]-phosphate + AMP + H(+). The catalysed reaction is [pyruvate, water dikinase]-phosphate + phosphate + H(+) = [pyruvate, water dikinase] + diphosphate. Its function is as follows. Bifunctional serine/threonine kinase and phosphorylase involved in the regulation of the phosphoenolpyruvate synthase (PEPS) by catalyzing its phosphorylation/dephosphorylation. This is Putative phosphoenolpyruvate synthase regulatory protein from Pseudomonas aeruginosa (strain LESB58).